The sequence spans 585 residues: Cytochrome P450 monooxygenase AOL_s00215g278 (585 aa).

Cys518 is a binding site for heme.

Belongs to the cytochrome P450 family. Requires heme as cofactor.

Its pathway is secondary metabolite biosynthesis; terpenoid biosynthesis. Cytochrome P450 monooxygenase; part of the gene cluster that mediates the biosynthesis of sesquiterpenyl epoxy-cyclohexenoids (SECs) such as anthrobotrisins and arthrosporols, metabolites that possess a novel hybrid carbon skeleton consisting of a polyketide-derived epoxycyclohexenol combined with a terpenoid-derived monocyclic sesquiterpenol substructure (PKS-PTS hybrid). The SEC pathway plays an important role for fungal soil colonization via decreasing fungal nematode-capturing ability. Within the pathway, the cytochrome P450 monooxygenase AOL_s00215g278 plays a role in the oxygenation of the phenol moiety, most likely in the epoxy formation. The pathway begins with the biosynthesis of 6-methylsalicylic acid (6-MSA), the first precursor of the polyketide-derived epoxycyclohexenol in arthrosporols, by the polyketide synthase (PKS) AOL_s00215g283 via condensation of 1 acetate and 3 malonate units. The 6-methylsalicylic acid decarboxylase AOL_s00215g281 then catalyzes the decarboxylation of 6-methylsalicylic acid to yield m-cresol. The cytochrome P450 monooxygenase AOL_s00215g282 further oxidizes m-cresol to yield toluquinol. With the assistance of the oxidoreductase AOL_s00215g277, the polyprenyl transferase AOL_s00215g276 catalyzes the farnesylation of toluquinol to produce farnesyl hydroquinone, the hybrid precursor for biosynthesis of SECs. Farnesyl hydroquinone undergoes epoxidation and then subsequent dehydrogenation to form farnesyl epoxy-quinone, the first and simplest SEC. The cytochrome P450 monooxygenase AOL_s00215g278 and the FAD-dependent monooxygenase AOL_s00215g279 might be involved in the oxygenation of the phenol moiety, most likely in the epoxy formation. The cytochrome P450 monooxygenases AOL_s00215g274 and AOL_s00215g280 are involved in specific regional ketone reductions at respectively C-4 and C-1 of farnesyl epoxy-quinone PubMed:33823587. This chain is Cytochrome P450 monooxygenase AOL_s00215g278, found in Arthrobotrys oligospora (strain ATCC 24927 / CBS 115.81 / DSM 1491) (Nematode-trapping fungus).